Consider the following 104-residue polypeptide: UPF0473 protein SH1304 (104 aa).

This sequence belongs to the UPF0473 family.

The sequence is that of UPF0473 protein SH1304 from Staphylococcus haemolyticus (strain JCSC1435).